The sequence spans 124 residues: ATP synthase epsilon chain (124 aa).

Residues 97–124 form a disordered region; it reads ARVREASSEEEKSRAESELRAVKRSKEK.

Belongs to the ATPase epsilon chain family. In terms of assembly, F-type ATPases have 2 components, CF(1) - the catalytic core - and CF(0) - the membrane proton channel. CF(1) has five subunits: alpha(3), beta(3), gamma(1), delta(1), epsilon(1). CF(0) has three main subunits: a, b and c.

Its subcellular location is the cell membrane. In terms of biological role, produces ATP from ADP in the presence of a proton gradient across the membrane. This chain is ATP synthase epsilon chain, found in Corynebacterium urealyticum (strain ATCC 43042 / DSM 7109).